We begin with the raw amino-acid sequence, 294 residues long: Glycine--tRNA ligase alpha subunit (294 aa).

This sequence belongs to the class-II aminoacyl-tRNA synthetase family. As to quaternary structure, tetramer of two alpha and two beta subunits.

The protein localises to the cytoplasm. The enzyme catalyses tRNA(Gly) + glycine + ATP = glycyl-tRNA(Gly) + AMP + diphosphate. The sequence is that of Glycine--tRNA ligase alpha subunit from Trichodesmium erythraeum (strain IMS101).